Here is a 966-residue protein sequence, read N- to C-terminus: Replication protein 1a (966 aa).

A methyltransferase region spans residues 49–381 (RNKLSVAECD…VIINGQSIMS (333 aa)). An Alphavirus-like MT domain is found at 71-261 (NLTHEYTAPH…HDWKNLGSFL (191 aa)). In terms of domain architecture, (+)RNA virus helicase ATP-binding spans 660–815 (DKTCSCANAK…NIEYDKRDIV (156 aa)). The tract at residues 687–951 (MVDGVAGCGK…TRHKRTFEYL (265 aa)) is ATP-dependent helicase. ATP is bound at residue 690–697 (GVAGCGKT). The 151-residue stretch at 816–966 (SKTFRCPQDV…GGDLISFYVT (151 aa)) folds into the (+)RNA virus helicase C-terminal domain.

Belongs to the bromoviridae replication protein 1a family.

The protein resides in the host endoplasmic reticulum membrane. Functionally, involved in the virus replication. Contains a helicase domain and a methyltransferase domain. The methyltransferase domain is probably involved in viral RNA capping. This chain is Replication protein 1a, found in Vicia faba (Broad bean).